Here is a 374-residue protein sequence, read N- to C-terminus: tRNA-specific 2-thiouridylase MnmA (374 aa).

ATP is bound by residues 12–19 (GMSGGVDS) and methionine 38. Positions 98-100 (NPD) are interaction with target base in tRNA. Cysteine 103 functions as the Nucleophile in the catalytic mechanism. Cysteine 103 and cysteine 207 are joined by a disulfide. Glycine 128 is a binding site for ATP. The interaction with tRNA stretch occupies residues 157-159 (KDQ). The active-site Cysteine persulfide intermediate is the cysteine 207. Residues 321–322 (RY) form an interaction with tRNA region.

It belongs to the MnmA/TRMU family.

The protein localises to the cytoplasm. The catalysed reaction is S-sulfanyl-L-cysteinyl-[protein] + uridine(34) in tRNA + AH2 + ATP = 2-thiouridine(34) in tRNA + L-cysteinyl-[protein] + A + AMP + diphosphate + H(+). In terms of biological role, catalyzes the 2-thiolation of uridine at the wobble position (U34) of tRNA, leading to the formation of s(2)U34. The sequence is that of tRNA-specific 2-thiouridylase MnmA from Aliivibrio fischeri (strain MJ11) (Vibrio fischeri).